The following is a 706-amino-acid chain: Double-strand break repair protein MRE11 (706 aa).

The residue at position 2 (serine 2) is an N-acetylserine. Serine 2 is subject to Phosphoserine. Residues aspartate 20, histidine 22, and aspartate 60 each contribute to the Mn(2+) site. The interaction with NBN stretch occupies residues 87–117 (RPVQFEVISDQSVNFGFSKFPWVNYQDGNLN). Asparagine 128 is a Mn(2+) binding site. Histidine 129 functions as the Proton donor in the catalytic mechanism. Mn(2+) contacts are provided by histidine 217, histidine 245, and histidine 247. A Glycyl lysine isopeptide (Lys-Gly) (interchain with G-Cter in SUMO2) cross-link involves residue lysine 255. Position 275 is a phosphoserine (serine 275). A Glycyl lysine isopeptide (Lys-Gly) (interchain with G-Cter in UFM1) cross-link involves residue lysine 282. Lysine 339 is covalently cross-linked (Glycyl lysine isopeptide (Lys-Gly) (interchain with G-Cter in ubiquitin)). Residues lysine 384 and lysine 468 each participate in a glycyl lysine isopeptide (Lys-Gly) (interchain with G-Cter in SUMO) cross-link. A Glycyl lysine isopeptide (Lys-Gly) (interchain with G-Cter in ubiquitin) cross-link involves residue lysine 481. Basic and acidic residues predominate over residues 505 to 514 (FRESRQRNTN). Positions 505 to 706 (FRESRQRNTN…SSSCPRRNRR (202 aa)) are disordered. Residues 531–541 (RSQSETSTSAF) show a composition bias toward polar residues. The span at 569–579 (GRGRGRGRRGA) shows a compositional bias: basic residues. 9 positions are modified to asymmetric dimethylarginine: arginine 570, arginine 572, arginine 574, arginine 576, arginine 577, arginine 580, arginine 587, arginine 592, and arginine 594. A GAR motif is present at residues 570–594 (RGRGRGRRGARGQSSAPRGGSQRGR). Residues 580–589 (RGQSSAPRGG) show a composition bias toward low complexity. Residues 603–617 (RGRSSKATSSTSRNM) show a composition bias toward polar residues. Phosphoserine is present on residues serine 618, serine 640, and serine 648. A compositionally biased stretch (acidic residues) spans 643–653 (IEVDDSDEDDI). Over residues 655-679 (PTNSRADQRWSGTTSSKRMSQSQTA) the composition is skewed to polar residues. An N6-lactoyllysine modification is found at lysine 671. Phosphoserine is present on residues serine 674, serine 676, serine 686, and serine 699. Residues 684–694 (FESDEDDDDDP) show a composition bias toward acidic residues.

Belongs to the MRE11/RAD32 family. As to quaternary structure, component of the MRN complex composed of two heterodimers RAD50 and MRE11 associated with a single NBN. The MRN complexes dimerize on DNA to form joined MRN-MRN oligomers required for DNA double-strand break repair. As part of the MRN complex, interacts with MCM9; the interaction recruits the complex to DNA repair sites. Component of the BASC complex, at least composed of BRCA1, MSH2, MSH6, MLH1, ATM, BLM, RAD50, MRE11 and NBN. Found in a complex with TERF2. Interacts with DCLRE1C/Artemis and DCLRE1B/Apollo. Interacts with ATF2. Interacts with EXD2. Interacts with MRNIP. Interacts with SAMHD1; leading to stimulate 3'-5' exonuclease activity. Interacts (when ubiquitinated) with UBQLN4 (via its UBA domain). Interacts with CYREN (via XLF motif). Interacts with GFI1; promoting methylation by PRMT1. Interacts with DYNLL1; inhibiting the activity of MRE11. Interacts with C1QBP and RAD50; interaction takes place in absence of DNA damage to form the MRC (MRE11-RAD50-C1QBP) complex that inhibits the activity of MRE11. Interacts with AGER/RAGE; AGER is recruited to DNA double-strand break sites where it enhances MRE11 endonuclease activity to promote DNA repair. Mn(2+) serves as cofactor. Post-translationally, phosphorylated by ATM at Ser-674 and Ser-676 in response to DNA damage, promoting MRE11 activity: phosphorylation activates MRE11 by preventing the interaction between MRE11 and the C1QBP inhibitor. Phosphorylation at Ser-648 by PLK1 primes for phosphorylation at Ser-686 by CK2, inhibiting recruitment of the MRN complex to DNA damage sites. In terms of processing, asymmetric dimethylation by PRMT1 promotes MRE11 exonuclease activity. Lactylation at Lys-671 by CREBBP/CBP in response to DNA damage promotes DNA binding and MRE11 activity. Post-translationally, acetylated on lysine residues by KAT2A /GCN5. In terms of processing, ubiquitinated following DNA damage. Ubiquitination triggers interaction with UBQLN4, leading to MRE11 removal from chromatin and degradation by the proteasome. Ubiquitinated at Lys-339 and Lys-481 by RNF126 via 'Lys-27'- and 'Lys-29'-linked polyubiquitin chains, promoting the exonuclease activity of MRE11. SUMOylated by PIAS1, stabilizing MRE11 on chromatin during end resection. DeSUMOylated by SENP3 following removal from DNA double-strand breaks (DSBs). Post-translationally, ufmylation at Lys-282 promotes MRE11 activity and is required for activation of the ATM and ATR kinases by the MRN complex.

It is found in the nucleus. Its subcellular location is the chromosome. It localises to the telomere. Interaction with SAMHD1 stimulates the double-strand-specific 3'-5' exonuclease activity. RBBP8/CtIP specifically promotes the endonuclease activity to clear protein-DNA adducts and generate clean double-strand break ends. DYNLL1-binding inhibits the activity of MRE11. MRE11 activity is inhibited by C1QBP: in absence of DNA damage, C1QBP interacts with unphosphorylated MRE11, preventing formation and activity of the MRN complex. Its function is as follows. Core component of the MRN complex, which plays a central role in double-strand break (DSB) repair, DNA recombination, maintenance of telomere integrity and meiosis. The MRN complex is involved in the repair of DNA double-strand breaks (DSBs) via homologous recombination (HR), an error-free mechanism which primarily occurs during S and G2 phases. The complex (1) mediates the end resection of damaged DNA, which generates proper single-stranded DNA, a key initial steps in HR, and is (2) required for the recruitment of other repair factors and efficient activation of ATM and ATR upon DNA damage. Within the MRN complex, MRE11 possesses both single-strand endonuclease activity and double-strand-specific 3'-5' exonuclease activity. After DSBs, MRE11 is loaded onto DSBs sites and cleaves DNA by cooperating with RBBP8/CtIP to initiate end resection. MRE11 first endonucleolytically cleaves the 5' strand at DNA DSB ends to prevent non-homologous end joining (NHEJ) and licence HR. It then generates a single-stranded DNA gap via 3' to 5' exonucleolytic degradation to create entry sites for EXO1- and DNA2-mediated 5' to 3' long-range resection, which is required for single-strand invasion and recombination. RBBP8/CtIP specifically promotes the endonuclease activity of MRE11 to clear protein-DNA adducts and generate clean double-strand break ends. MRE11 endonuclease activity is also enhanced by AGER/RAGE. The MRN complex is also required for DNA damage signaling via activation of the ATM and ATR kinases: the nuclease activity of MRE11 is not required to activate ATM and ATR. The MRN complex is also required for the processing of R-loops. The MRN complex is involved in the activation of the cGAS-STING pathway induced by DNA damage during tumorigenesis: the MRN complex acts by displacing CGAS from nucleosome sequestration, thereby activating it. In telomeres the MRN complex may modulate t-loop formation. This chain is Double-strand break repair protein MRE11, found in Mus musculus (Mouse).